The following is a 184-amino-acid chain: Peptidoglycan-recognition protein SC2 (184 aa).

The signal sequence occupies residues 1 to 20 (MANKALILLAVLFCAQAVLG). The N-acetylmuramoyl-L-alanine amidase domain occupies 45–169 (SYAVIHHTAG…RQVGSTECPG (125 aa)). H50 is a Zn(2+) binding site. C57 and C63 form a disulfide bridge. Zn(2+) contacts are provided by H159 and C167.

Belongs to the N-acetylmuramoyl-L-alanine amidase 2 family. Zn(2+) is required as a cofactor. In terms of tissue distribution, constitutively expressed at high level in gut, in addition to the induced expression in fat body.

It localises to the secreted. The enzyme catalyses Hydrolyzes the link between N-acetylmuramoyl residues and L-amino acid residues in certain cell-wall glycopeptides.. In terms of biological role, N-acetylmuramyl-L-alanine amidase involved in innate immunity by degrading bacterial peptidoglycans (PGN). Probably plays a scavenger role by digesting biologically active PGN into biologically inactive fragments. Has no direct bacteriolytic activity. The polypeptide is Peptidoglycan-recognition protein SC2 (PGRP-SC2) (Drosophila melanogaster (Fruit fly)).